Reading from the N-terminus, the 374-residue chain is tRNA-specific 2-thiouridylase MnmA (374 aa).

ATP contacts are provided by residues 17-24 (GMSGGVDS) and methionine 43. An interaction with target base in tRNA region spans residues 103 to 105 (NPD). Cysteine 108 acts as the Nucleophile in catalysis. Cysteine 108 and cysteine 204 are joined by a disulfide. An ATP-binding site is contributed by glycine 132. Residues 154-156 (KDQ) are interaction with tRNA. Catalysis depends on cysteine 204, which acts as the Cysteine persulfide intermediate. Residues 316–317 (RY) form an interaction with tRNA region.

Belongs to the MnmA/TRMU family.

It localises to the cytoplasm. The catalysed reaction is S-sulfanyl-L-cysteinyl-[protein] + uridine(34) in tRNA + AH2 + ATP = 2-thiouridine(34) in tRNA + L-cysteinyl-[protein] + A + AMP + diphosphate + H(+). In terms of biological role, catalyzes the 2-thiolation of uridine at the wobble position (U34) of tRNA, leading to the formation of s(2)U34. The polypeptide is tRNA-specific 2-thiouridylase MnmA (Pseudomonas putida (strain W619)).